Consider the following 314-residue polypeptide: Synaptophysin (314 aa).

Topologically, residues 1–25 are cytoplasmic; sequence MLLLADMDVVNQLVAGGQFRVVKEP. Residues 21 to 228 form the MARVEL domain; that stretch reads VVKEPLGFVK…NLWFVFKETG (208 aa). Residues 26–49 form a helical membrane-spanning segment; it reads LGFVKVLQWVFAIFAFATCGSYTG. The Vesicular segment spans residues 50-107; it reads ELRLSVECANKTESALNIEVEFEYPFRLHQVYFDAPSCVKGGTTKIFLVGDYSSSAEF. Residue Asn59 is glycosylated (N-linked (GlcNAc...) asparagine). Phosphotyrosine is present on Tyr81. A helical transmembrane segment spans residues 108-131; that stretch reads FVTVAVFAFLYSMGALATYIFLQN. Residues 132 to 138 lie on the Cytoplasmic side of the membrane; it reads KYRENNK. Residues 139-162 form a helical membrane-spanning segment; that stretch reads GPMMDFLATAVFAFMWLVSSSAWA. Residues 163-200 are Vesicular-facing; sequence KGLSDVKMATDPENIIKEMPMCRQTGNTCKELRDPVTS. A helical membrane pass occupies residues 201–224; sequence GLNTSVVFGFLNLVLWVGNLWFVF. Over 225 to 314 the chain is Cytoplasmic; that stretch reads KETGWAAPFM…GAPTSFSNQM (90 aa). Thr227 bears the Phosphothreonine mark. The disordered stretch occupies residues 239–314; sequence GAPEKQPAPG…GAPTSFSNQM (76 aa). The span at 254–264 shows a compositional bias: gly residues; sequence AGYGQGPGGYG. The tract at residues 255-305 is repeats, Gly-rich; the sequence is GYGQGPGGYGPQDSYGPQGGYQPDYGQPASGGGGGYGPQGDYGQQGYGQQG. A compositionally biased stretch (low complexity) spans 265-282; it reads PQDSYGPQGGYQPDYGQP. 2 positions are modified to phosphotyrosine: Tyr279 and Tyr296. Residues 283–303 are compositionally biased toward gly residues; it reads ASGGGGGYGPQGDYGQQGYGQ.

The protein belongs to the synaptophysin/synaptobrevin family. In terms of assembly, homohexamer or homotetramer. Interacts with SRCIN1. Interacts with VAMP2; the interaction is inhibited by interaction of VAPM2 with SEPT8. Post-translationally, ubiquitinated; mediated by SIAH1 or SIAH2 and leading to its subsequent proteasomal degradation. Phosphorylated by SRC.

It is found in the cytoplasmic vesicle. Its subcellular location is the secretory vesicle. The protein resides in the synaptic vesicle membrane. It localises to the synapse. The protein localises to the synaptosome. Its function is as follows. Possibly involved in structural functions as organizing other membrane components or in targeting the vesicles to the plasma membrane. Involved in the regulation of short-term and long-term synaptic plasticity. The polypeptide is Synaptophysin (Syp) (Mus musculus (Mouse)).